Here is a 183-residue protein sequence, read N- to C-terminus: Protein jagunal homolog 1 (183 aa).

The Cytoplasmic portion of the chain corresponds to 1 to 39 (MASRAGPRAAGTDGSDFQHRERVAMHYQMSVTLKYEIKK). Ser3 is modified (phosphoserine). The chain crosses the membrane as a helical span at residues 40 to 60 (LIYVHLVIWLLLVAKMSVGHL). Over 61–71 (RLLSHDQVAMP) the chain is Lumenal. A helical membrane pass occupies residues 72–92 (YQWEYPYLLSILPSLLGLLSF). The Cytoplasmic portion of the chain corresponds to 93–96 (PRNN). The chain crosses the membrane as a helical span at residues 97–117 (ISYLVLSMISMGLFSIAPLIY). Residues 118–137 (GSMEMFPAAQQLYRHGKAYR) are Lumenal-facing. Residues 138–158 (FLFGFSAVSIMYLVLVLAVQV) traverse the membrane as a helical segment. The Cytoplasmic segment spans residues 159 to 183 (HAWQLYYSKKLLDSWFTSTQEKKHK).

The protein belongs to the jagunal family. Interacts with COPA, COPB2 and COPG2. As to expression, ubiquitously expressed.

The protein localises to the endoplasmic reticulum membrane. Endoplasmic reticulum transmembrane protein involved in vesicle-mediated transport, which is required for neutrophil function. Required for vesicle-mediated transport; it is however unclear whether it is involved in early secretory pathway or intracellular protein transport. Acts as a regulator of neutrophil function, probably via its role in vesicle-mediated transport: required for defense against fungal pathogens and for granulocyte colony-stimulating factor (GM-CSF) signaling pathway; possibly by regulating glycosylation and/or targeting of proteins contributing to the viability and migration of neutrophils. The polypeptide is Protein jagunal homolog 1 (Homo sapiens (Human)).